A 160-amino-acid chain; its full sequence is uncharacterized protein (160 aa).

The helical transmembrane segment at 1 to 21 threads the bilayer; it reads MSIQTLIIISIVIFILWLTFT.

It belongs to the IIV-6 203L/325L family.

It is found in the membrane. This is an uncharacterized protein from Invertebrate iridescent virus 6 (IIV-6).